The chain runs to 239 residues: tRNA (guanine-N(1)-)-methyltransferase (239 aa).

S-adenosyl-L-methionine-binding positions include Gly112 and 131-136; that span reads LGDFIL.

Belongs to the RNA methyltransferase TrmD family. In terms of assembly, homodimer.

Its subcellular location is the cytoplasm. It catalyses the reaction guanosine(37) in tRNA + S-adenosyl-L-methionine = N(1)-methylguanosine(37) in tRNA + S-adenosyl-L-homocysteine + H(+). Functionally, specifically methylates guanosine-37 in various tRNAs. The protein is tRNA (guanine-N(1)-)-methyltransferase of Clostridium tetani (strain Massachusetts / E88).